The following is a 24-amino-acid chain: Brevinin-1SPc (24 aa).

Cys-18 and Cys-24 are disulfide-bonded.

In terms of tissue distribution, expressed by the skin glands.

It localises to the secreted. In terms of biological role, antimicrobial peptide with activity against Gram-negative and Gram-positive bacteria and fungi. Also shows hemolytic activity. This chain is Brevinin-1SPc, found in Lithobates septentrionalis (Mink frog).